A 258-amino-acid chain; its full sequence is Glutathione S-transferase DHAR3, chloroplastic (258 aa).

The transit peptide at 1 to 42 (MISLRFQPSTTAGVLSASVSRAGFIKRCGSTKPGRVGRFVTM) directs the protein to the chloroplast. Cysteine 52 bears the S-glutathionyl cysteine mark. Lysine 54 and aspartate 65 together coordinate glutathione. L-ascorbate-binding residues include lysine 54 and aspartate 65. The GST N-terminal domain maps to 56-129 (SITTPNKLGD…DVITQALEEK (74 aa)). The active-site Nucleophile is the cysteine 66. A disulfide bridge connects residues cysteine 66 and cysteine 69. The Glutathione-binding motif lies at 66–71 (CPFCQK). The glutathione site is built by lysine 93, valine 106, serine 119, histidine 205, and tryptophan 252. Positions 130–258 (YPEPPLATPP…IAGWRPKVMG (129 aa)) constitute a GST C-terminal domain. Lysine 255 serves as a coordination point for L-ascorbate.

The protein belongs to the GST superfamily. DHAR family. In terms of assembly, monomer. Interacts with TRX3. Partial S-glutathionylation and intramolecular disulfide bond formation between Cys-66 and Cys-69 in the presence of oxidized glutathione (GSSG). Could be reduced by TRX-dependent process.

The protein localises to the plastid. It localises to the chloroplast stroma. It carries out the reaction RX + glutathione = an S-substituted glutathione + a halide anion + H(+). It catalyses the reaction L-dehydroascorbate + 2 glutathione = glutathione disulfide + L-ascorbate. Functionally, displays a dual function. As a soluble protein, exhibits glutathione-dependent thiol transferase and dehydroascorbate (DHA) reductase activities. Key component of the ascorbate recycling system. Involved in the redox homeostasis, especially in scavenging of ROS under oxidative stresses. This is Glutathione S-transferase DHAR3, chloroplastic (DHAR3) from Arabidopsis thaliana (Mouse-ear cress).